Consider the following 500-residue polypeptide: Glutamate--tRNA ligase (500 aa).

A 'HIGH' region motif is present at residues 12–22; it reads PSPTGHLHIGN. The 'KMSKS' region signature appears at 259 to 263; it reads KLSKR. ATP is bound at residue Lys262.

This sequence belongs to the class-I aminoacyl-tRNA synthetase family. Glutamate--tRNA ligase type 1 subfamily. As to quaternary structure, monomer.

Its subcellular location is the cytoplasm. The catalysed reaction is tRNA(Glu) + L-glutamate + ATP = L-glutamyl-tRNA(Glu) + AMP + diphosphate. In terms of biological role, catalyzes the attachment of glutamate to tRNA(Glu) in a two-step reaction: glutamate is first activated by ATP to form Glu-AMP and then transferred to the acceptor end of tRNA(Glu). This chain is Glutamate--tRNA ligase, found in Lactobacillus delbrueckii subsp. bulgaricus (strain ATCC 11842 / DSM 20081 / BCRC 10696 / JCM 1002 / NBRC 13953 / NCIMB 11778 / NCTC 12712 / WDCM 00102 / Lb 14).